The chain runs to 138 residues: ATP synthase epsilon chain (138 aa).

Belongs to the ATPase epsilon chain family. F-type ATPases have 2 components, CF(1) - the catalytic core - and CF(0) - the membrane proton channel. CF(1) has five subunits: alpha(3), beta(3), gamma(1), delta(1), epsilon(1). CF(0) has three main subunits: a, b and c.

It is found in the cell membrane. In terms of biological role, produces ATP from ADP in the presence of a proton gradient across the membrane. The protein is ATP synthase epsilon chain of Streptococcus equi subsp. zooepidemicus (strain H70).